A 384-amino-acid chain; its full sequence is Ferrochelatase, mitochondrial (384 aa).

Position 156 (Cys-156) interacts with [2Fe-2S] cluster. Catalysis depends on residues His-190 and Asn-343. [2Fe-2S] cluster is bound by residues Cys-363, Cys-366, and Cys-371.

It belongs to the ferrochelatase family. As to quaternary structure, homodimer. Homotetramer. [2Fe-2S] cluster is required as a cofactor.

It localises to the mitochondrion inner membrane. The catalysed reaction is heme b + 2 H(+) = protoporphyrin IX + Fe(2+). Its pathway is porphyrin-containing compound metabolism; protoheme biosynthesis; protoheme from protoporphyrin-IX: step 1/1. Its function is as follows. Catalyzes the ferrous insertion into protoporphyrin IX. Terminal enzyme in heme biosynthesis. Contains four conserved cysteines that function as cluster ligands and play a crucial role in maintaining protein structure. This is Ferrochelatase, mitochondrial from Drosophila melanogaster (Fruit fly).